Here is a 590-residue protein sequence, read N- to C-terminus: Cytosolic Fe-S cluster assembly factor nar1 (590 aa).

Cys-20 is a [4Fe-4S] cluster binding site. A disordered region spans residues 25-50; the sequence is ESLPQKQSNENPYEVTTEDKVQPENP. [4Fe-4S] cluster is bound by residues Cys-60, Cys-63, Cys-66, Cys-204, and Cys-259. Positions 423–446 are disordered; the sequence is PGAKVATGQTAGGRRQPISRNGAS. Residues Cys-461 and Cys-465 each coordinate [4Fe-4S] cluster.

It belongs to the NARF family.

Functionally, component of the cytosolic Fe/S protein assembly machinery. Required for maturation of extramitochondrial Fe/S proteins. May play a role in the transfer of pre-assembled Fe/S clusters to target apoproteins. This is Cytosolic Fe-S cluster assembly factor nar1 (nar1) from Emericella nidulans (strain FGSC A4 / ATCC 38163 / CBS 112.46 / NRRL 194 / M139) (Aspergillus nidulans).